The primary structure comprises 141 residues: MAKKVSKLVKLQIPAGKANPAPPVGPALGQAGVNIMGFCKEFNARTQDQAGLIIPVVITVYEDRSFTFITKTPPAAVLLKKAAGIESGSGEPNRKKVATVKRDKVREIAELKMPDLNASSVETAMLMVEGTARSMGIVIED.

Belongs to the universal ribosomal protein uL11 family. As to quaternary structure, part of the ribosomal stalk of the 50S ribosomal subunit. Interacts with L10 and the large rRNA to form the base of the stalk. L10 forms an elongated spine to which L12 dimers bind in a sequential fashion forming a multimeric L10(L12)X complex. In terms of processing, one or more lysine residues are methylated.

Its function is as follows. Forms part of the ribosomal stalk which helps the ribosome interact with GTP-bound translation factors. The polypeptide is Large ribosomal subunit protein uL11 (Exiguobacterium sp. (strain ATCC BAA-1283 / AT1b)).